The primary structure comprises 576 residues: MAEGTSQRPLTPLSQAFLSTNTLSPASSPLTFHSEAASLRRKRSNFFPKLDELNGAQDEEMRGLNIPGGSGYLENRYGRDKFTFSDAAVNSAGMGGSGIFSHNNADDGLGDGSSTVLPSSLKQMLDPEISTANNPSAKPRRTRLQTAWKEATNSAGLSLRSASALDVLKNSGPATTSLLSSTTYPFDSLNAFNEPSHSHVPNSASSTALSRGMSNSVTLTAPPEPDEETIPTAIVIKNIPFSLKKEVLFKVFTALDIPRPYAFNYHFDNGVFRGLAFANFHSPEEAKTVVQVLNGYEITGRRLRVEWKRQLPPAERERVERGKQEKRAVEERKNQLKSPFSVANIGAGIDFDLNDPAILNVYSHILLFYYRSDNTNDLVFDSSTTQEERRVAALLASRLNLNHSVTGDGEAKQVVITMPSTHFTPANNSSANHSPLMAPNASTLNPSSLGASNLSQPSLANHLSSSGLFDNGLFSSGGLSSNFSSLRRPAPSMHLADSIRSLRGLNDSKAFSDIRSMPATPLELATPFANLNVSSPLDRNATNSSNTLNGSAMNDYFASLTPSNTGAIGSRTFTKN.

One can recognise an RRM domain in the interval T232–Q310. The R3H domain maps to D355–S420.

In terms of assembly, interacts with csx1. Phosphorylated by sty1.

Its subcellular location is the cytoplasm. In terms of biological role, regulates global gene expression after oxidative stress. Interacts and stabilizes mRNAs and may regulate their transition between different cytoplasmic components after oxidative stress. This chain is RNA-binding post-transcriptional regulator cip2 (cip2), found in Schizosaccharomyces pombe (strain 972 / ATCC 24843) (Fission yeast).